An 817-amino-acid chain; its full sequence is Coiled-coil domain-containing protein 175 (817 aa).

Coiled-coil stretches lie at residues 130–166 and 217–594; these read ILEI…ALGI and LQDA…KQEE. The segment at 761–817 is disordered; that stretch reads EEESPSSLSKEDLQKAGMKQKEEKTLRFSPSLHTRRDTLSRNCKMIKKRSRSPKNKP. Over residues 769 to 786 the composition is skewed to basic and acidic residues; it reads SKEDLQKAGMKQKEEKTL. The span at 804–817 shows a compositional bias: basic residues; the sequence is KMIKKRSRSPKNKP.

The protein is Coiled-coil domain-containing protein 175 (Ccdc175) of Rattus norvegicus (Rat).